The following is a 351-amino-acid chain: Selenide, water dikinase (351 aa).

Residue Sec15 is part of the active site. Position 15 (Sec15) is a non-standard amino acid, selenocysteine. Residues Lys18 and 47-49 (DNE) contribute to the ATP site. Asp50 lines the Mg(2+) pocket. Residues Asp67, Asp90, and 138-140 (GHS) each bind ATP. Asp90 provides a ligand contact to Mg(2+). Asp227 contacts Mg(2+).

It belongs to the selenophosphate synthase 1 family. Class I subfamily. Homodimer. Mg(2+) serves as cofactor.

It catalyses the reaction hydrogenselenide + ATP + H2O = selenophosphate + AMP + phosphate + 2 H(+). In terms of biological role, synthesizes selenophosphate from selenide and ATP. This is Selenide, water dikinase from Nitratidesulfovibrio vulgaris (strain DP4) (Desulfovibrio vulgaris).